The following is a 127-amino-acid chain: Holo-[acyl-carrier-protein] synthase (127 aa).

2 residues coordinate Mg(2+): Asp-8 and Glu-56.

Belongs to the P-Pant transferase superfamily. AcpS family. Mg(2+) serves as cofactor.

Its subcellular location is the cytoplasm. It carries out the reaction apo-[ACP] + CoA = holo-[ACP] + adenosine 3',5'-bisphosphate + H(+). Functionally, transfers the 4'-phosphopantetheine moiety from coenzyme A to a Ser of acyl-carrier-protein. The chain is Holo-[acyl-carrier-protein] synthase from Cytophaga hutchinsonii (strain ATCC 33406 / DSM 1761 / CIP 103989 / NBRC 15051 / NCIMB 9469 / D465).